We begin with the raw amino-acid sequence, 208 residues long: Large ribosomal subunit protein uL3 (208 aa).

The segment at 116–148 (GFQGVIKRHGQSRGPMAHGSRYHRRPGSMGPVA) is disordered.

The protein belongs to the universal ribosomal protein uL3 family. In terms of assembly, part of the 50S ribosomal subunit. Forms a cluster with proteins L14 and L19.

One of the primary rRNA binding proteins, it binds directly near the 3'-end of the 23S rRNA, where it nucleates assembly of the 50S subunit. This chain is Large ribosomal subunit protein uL3, found in Streptococcus pneumoniae (strain Hungary19A-6).